The chain runs to 291 residues: Elongation factor Ts (291 aa).

The involved in Mg(2+) ion dislocation from EF-Tu stretch occupies residues 79 to 82; that stretch reads TDFV.

It belongs to the EF-Ts family.

It is found in the cytoplasm. Its function is as follows. Associates with the EF-Tu.GDP complex and induces the exchange of GDP to GTP. It remains bound to the aminoacyl-tRNA.EF-Tu.GTP complex up to the GTP hydrolysis stage on the ribosome. This Leuconostoc mesenteroides subsp. mesenteroides (strain ATCC 8293 / DSM 20343 / BCRC 11652 / CCM 1803 / JCM 6124 / NCDO 523 / NBRC 100496 / NCIMB 8023 / NCTC 12954 / NRRL B-1118 / 37Y) protein is Elongation factor Ts.